We begin with the raw amino-acid sequence, 599 residues long: Chaperone protein DnaK (599 aa).

Thr-187 is subject to Phosphothreonine; by autocatalysis. The tract at residues 575–599 (AQQAATENSKDSDTVEAEIVDDKAN) is disordered.

It belongs to the heat shock protein 70 family.

Its function is as follows. Acts as a chaperone. The sequence is that of Chaperone protein DnaK from Mycoplasmopsis pulmonis (strain UAB CTIP) (Mycoplasma pulmonis).